Reading from the N-terminus, the 367-residue chain is C-X-C chemokine receptor type 3 (367 aa).

At 1-56 (MYLEVSERQVLDASDIAFLLENSTSPYDYGENESDFSDSPPCPQDFSLNFDRTFLP) the chain is on the extracellular side. A glycan (N-linked (GlcNAc...) asparagine) is linked at Asn22. 2 positions are modified to sulfotyrosine: Tyr27 and Tyr29. N-linked (GlcNAc...) asparagine glycosylation is present at Asn32. A helical transmembrane segment spans residues 57–77 (VLYSLLFLLGLLGNGAVAAVL). Residues 78-89 (LSQRTALSSTDT) lie on the Cytoplasmic side of the membrane. The helical transmembrane segment at 90–110 (FLLHLAVADVLLVLTLPLWAV) threads the bilayer. Residues 111–125 (DAAAQWVFGSGLCKV) lie on the Extracellular side of the membrane. The cysteines at positions 123 and 202 are disulfide-linked. The helical transmembrane segment at 126-146 (AGALFNINFYAGAFLLACISF) threads the bilayer. The Cytoplasmic portion of the chain corresponds to 147–168 (DRYLSIVHATQIYRRDPWVRVA). Residues 169 to 189 (LTCIVVWGLCVLFALPDFIFL) traverse the membrane as a helical segment. The Extracellular portion of the chain corresponds to 190–222 (SASHDQRLNATHCQYNFPQVGRTALRVLQLVAG). Asn198 carries N-linked (GlcNAc...) asparagine glycosylation. Residues 223-243 (FLMPLLVMAYCYAHILAVLLV) form a helical membrane-spanning segment. Residues 244-255 (SRGQRRFRAMRL) lie on the Cytoplasmic side of the membrane. The chain crosses the membrane as a helical span at residues 256-276 (VVVVVVAFAVCWTPYHLVVLV). Over 277–300 (DILMDVGVLARNCGRESHVDVAKS) the chain is Extracellular. A helical membrane pass occupies residues 301-321 (VTSGMGYMHCCLNPLLYAFVG). The Cytoplasmic segment spans residues 322–367 (VKFKEQMWMLLMRLGRSDQRGPQRQPSSSRRESSWSETTEASYLGL). Residues 339–367 (DQRGPQRQPSSSRRESSWSETTEASYLGL) are disordered.

Belongs to the G-protein coupled receptor 1 family. As to quaternary structure, homomer. Forms heteromers with ACKR4. Interacts with PF4/CXCL4. Post-translationally, sulfation on Tyr-27 and Tyr-29 is essential for CXCL10 binding. N-glycosylated.

It is found in the cell membrane. Receptor for the C-X-C chemokine CXCL9, CXCL10 and CXCL11 and mediates the proliferation, survival and angiogenic activity of mesangial cells through a heterotrimeric G-protein signaling pathway. Probably promotes cell chemotaxis response. Binds to CCL21. Upon activation by PF4, induces activated T-lymphocytes migration mediated via downstream Ras/extracellular signal-regulated kinase (ERK) signaling. The chain is C-X-C chemokine receptor type 3 (Cxcr3) from Rattus norvegicus (Rat).